Reading from the N-terminus, the 175-residue chain is uncharacterized protein (175 aa).

This is an uncharacterized protein from Treponema pallidum (strain Nichols).